We begin with the raw amino-acid sequence, 675 residues long: Heat shock 70 kDa protein, mitochondrial (675 aa).

A mitochondrion-targeting transit peptide spans 1-51 (MAAVLRSLRRRDVASATFSAYRSLTGSTKPAYVAQKWSCLARPFSSRPAGN). A disordered region spans residues 638–675 (VSKIGEHMSGGSSGGSSAGGSQGGGDQAPEAEYEEVKK). The segment covering 648–663 (GSSGGSSAGGSQGGGD) has biased composition (gly residues). The span at 666 to 675 (PEAEYEEVKK) shows a compositional bias: acidic residues.

It belongs to the heat shock protein 70 family.

The protein resides in the mitochondrion. This chain is Heat shock 70 kDa protein, mitochondrial, found in Phaseolus vulgaris (Kidney bean).